The chain runs to 96 residues: Conantokin Rl-C (96 aa).

A signal peptide spans methionine 1–glycine 21. The propeptide occupies threonine 22–arginine 78. Positions serine 36–glutamate 85 are disordered. The span at serine 56–methionine 66 shows a compositional bias: basic and acidic residues. Residue glutamate 81 participates in a divalent metal cation binding. Residues glutamate 81, glutamate 82, glutamate 85, glutamate 89, and glutamate 93 each carry the 4-carboxyglutamate modification. Positions 85, 89, and 93 each coordinate a divalent metal cation. At asparagine 96 the chain carries Asparagine amide.

The protein belongs to the conotoxin B superfamily. The cofactor is Ca(2+). Requires Mg(2+) as cofactor. Expressed by the venom duct.

It localises to the secreted. Its function is as follows. Conantokins inhibit N-methyl-D-aspartate (NMDA) receptors. This toxin has antagonist activity on NR2B/GRIN2B (IC(50)=1.4 uM) and NR2A/GRIN2A (IC(50)=2.9 uM) subunits, when tested on rat receptors. This is Conantokin Rl-C from Conus rolani (Cone snail).